The sequence spans 188 residues: Multiple organellar RNA editing factor 7, mitochondrial (188 aa).

A mitochondrion-targeting transit peptide spans 1-20 (MARIIRRPLNLTAAVRFRLS). Residues 169-188 (DAKSGVVKKKHRRKRKKKLI) form a disordered region. Positions 174–188 (VVKKKHRRKRKKKLI) are enriched in basic residues.

Belongs to the MORF family. In terms of assembly, heterodimers with MORF8/RIP1, MORF5/RIP5 and MORF6/RIP6.

The protein resides in the mitochondrion. Functionally, involved in organellar RNA editing. Required for the processing of few RNA editing sites in mitochondria. This chain is Multiple organellar RNA editing factor 7, mitochondrial, found in Arabidopsis thaliana (Mouse-ear cress).